The sequence spans 292 residues: Undecaprenyl-diphosphatase (292 aa).

The next 5 membrane-spanning stretches (helical) occupy residues 87–107, 113–133, 190–210, 219–239, and 250–270; these read MGWY…LFEE, FRDL…LGMV, AFLL…KDIG, ATIV…AWFM, and FVYY…FGVL.

This sequence belongs to the UppP family.

The protein resides in the cell membrane. The catalysed reaction is di-trans,octa-cis-undecaprenyl diphosphate + H2O = di-trans,octa-cis-undecaprenyl phosphate + phosphate + H(+). In terms of biological role, catalyzes the dephosphorylation of undecaprenyl diphosphate (UPP). Confers resistance to bacitracin. This Thermobifida fusca (strain YX) protein is Undecaprenyl-diphosphatase.